Reading from the N-terminus, the 109-residue chain is Large ribosomal subunit protein bL19 (109 aa).

It belongs to the bacterial ribosomal protein bL19 family.

In terms of biological role, this protein is located at the 30S-50S ribosomal subunit interface and may play a role in the structure and function of the aminoacyl-tRNA binding site. This chain is Large ribosomal subunit protein bL19, found in Rubrobacter xylanophilus (strain DSM 9941 / JCM 11954 / NBRC 16129 / PRD-1).